The sequence spans 398 residues: Pectate lyase 1 (398 aa).

Residues 1 to 25 (MGIKHCCYILYFTLALVTLLQPVRS) form the signal peptide. Asparagine 37 is a glycosylation site (N-linked (GlcNAc...) asparagine). A disulfide bond links cysteine 55 and cysteine 72. Aspartate 195, aspartate 219, and aspartate 223 together coordinate Ca(2+). Arginine 275 is a catalytic residue.

It belongs to the polysaccharide lyase 1 family. Amb a subfamily. As to quaternary structure, monomer. The cofactor is Ca(2+). Post-translationally, the N-terminus is blocked. In terms of tissue distribution, pollen and flowers.

The catalysed reaction is Eliminative cleavage of (1-&gt;4)-alpha-D-galacturonan to give oligosaccharides with 4-deoxy-alpha-D-galact-4-enuronosyl groups at their non-reducing ends.. It participates in glycan metabolism; pectin degradation; 2-dehydro-3-deoxy-D-gluconate from pectin: step 2/5. In terms of biological role, has pectate lyase activity. The protein is Pectate lyase 1 of Ambrosia artemisiifolia (Common ragweed).